The primary structure comprises 156 residues: DNA gyrase inhibitor (156 aa).

It belongs to the DNA gyrase inhibitor family. In terms of assembly, interacts with DNA gyrase.

It is found in the cytoplasm. Functionally, inhibits the supercoiling activity of DNA gyrase. Acts by inhibiting DNA gyrase at an early step, prior to (or at the step of) binding of DNA by the gyrase. It protects cells against toxins that target DNA gyrase, by inhibiting activity of these toxins and reducing the formation of lethal double-strand breaks in the cell. The protein is DNA gyrase inhibitor of Serratia proteamaculans (strain 568).